Here is a 251-residue protein sequence, read N- to C-terminus: Demethylmenaquinone methyltransferase (251 aa).

S-adenosyl-L-methionine is bound by residues T66, D87, and 115-116 (NA).

Belongs to the class I-like SAM-binding methyltransferase superfamily. MenG/UbiE family.

The enzyme catalyses a 2-demethylmenaquinol + S-adenosyl-L-methionine = a menaquinol + S-adenosyl-L-homocysteine + H(+). It participates in quinol/quinone metabolism; menaquinone biosynthesis; menaquinol from 1,4-dihydroxy-2-naphthoate: step 2/2. Methyltransferase required for the conversion of demethylmenaquinol (DMKH2) to menaquinol (MKH2). The protein is Demethylmenaquinone methyltransferase of Symbiobacterium thermophilum (strain DSM 24528 / JCM 14929 / IAM 14863 / T).